We begin with the raw amino-acid sequence, 297 residues long: 4-hydroxy-tetrahydrodipicolinate synthase (297 aa).

T55 provides a ligand contact to pyruvate. Y144 serves as the catalytic Proton donor/acceptor. The active-site Schiff-base intermediate with substrate is K172. A pyruvate-binding site is contributed by I213.

Belongs to the DapA family. In terms of assembly, homotetramer; dimer of dimers.

It localises to the cytoplasm. The enzyme catalyses L-aspartate 4-semialdehyde + pyruvate = (2S,4S)-4-hydroxy-2,3,4,5-tetrahydrodipicolinate + H2O + H(+). It participates in amino-acid biosynthesis; L-lysine biosynthesis via DAP pathway; (S)-tetrahydrodipicolinate from L-aspartate: step 3/4. Its function is as follows. Catalyzes the condensation of (S)-aspartate-beta-semialdehyde [(S)-ASA] and pyruvate to 4-hydroxy-tetrahydrodipicolinate (HTPA). The chain is 4-hydroxy-tetrahydrodipicolinate synthase from Lactococcus lactis subsp. cremoris (strain SK11).